Here is a 400-residue protein sequence, read N- to C-terminus: Enoyl-[acyl-carrier-protein] reductase [NADH] (400 aa).

NAD(+)-binding positions include G48 to Y53, F74 to E75, D111 to A112, and L139 to A140. Y225 is a substrate binding site. Residue Y235 is the Proton donor of the active site. Residues K244 and V273 to T275 each bind NAD(+).

This sequence belongs to the TER reductase family. In terms of assembly, monomer.

It catalyses the reaction a 2,3-saturated acyl-[ACP] + NAD(+) = a (2E)-enoyl-[ACP] + NADH + H(+). It participates in lipid metabolism; fatty acid biosynthesis. Involved in the final reduction of the elongation cycle of fatty acid synthesis (FAS II). Catalyzes the reduction of a carbon-carbon double bond in an enoyl moiety that is covalently linked to an acyl carrier protein (ACP). This Shewanella loihica (strain ATCC BAA-1088 / PV-4) protein is Enoyl-[acyl-carrier-protein] reductase [NADH].